Here is a 1503-residue protein sequence, read N- to C-terminus: ATP-binding cassette sub-family C member 6 (1503 aa).

Residues 1-31 (MAAPAEPCAGQGVWNQTEPEPAATSLLSLCF) lie on the Extracellular side of the membrane. The N-linked (GlcNAc...) asparagine glycan is linked to asparagine 15. The chain crosses the membrane as a helical span at residues 32-52 (LRTAGVWVPPMYLWVLGPIYL). Residues 53 to 72 (LFIHHHGRGYLRMSPLFKAK) are Cytoplasmic-facing. A helical transmembrane segment spans residues 73-93 (MVLGFALIVLCTSSVAVALWK). Residues 94-98 (IQQGT) lie on the Extracellular side of the membrane. A helical transmembrane segment spans residues 99–119 (PEAPEFLIHPTVWLTTMSFAV). The Cytoplasmic portion of the chain corresponds to 120 to 131 (FLIHTERKKGVQ). A helical transmembrane segment spans residues 132–149 (SSGVLFGYWLLCFVLPAT). Residues 150–167 (NAAQQASGAGFQSDPVRH) are Extracellular-facing. Residues 168–188 (LSTYLCLSLVVAQFVLSCLAD) form a helical membrane-spanning segment. Residues 189 to 302 (QPPFFPEDPQ…GSQWRPLLKA (114 aa)) are Cytoplasmic-facing. A helical membrane pass occupies residues 303–323 (IWQVFHSTFLLGTLSLIISDV). Positions 311 to 593 (FLLGTLSLII…LPFSIHSLVQ (283 aa)) constitute an ABC transmembrane type-1 1 domain. Topologically, residues 324–349 (FRFTVPKLLSLFLEFIGDPKPPAWKG) are extracellular. A helical membrane pass occupies residues 350–370 (YLLAVLMFLSACLQTLFEQQN). The Cytoplasmic segment spans residues 371 to 426 (MYRLKVLQMRLRSAITGLVYRKVLALSSGSRKASAVGDVVNLVSVDVQRLTESVLY). The chain crosses the membrane as a helical span at residues 427–447 (LNGLWLPLVWIVVCFVYLWQL). The Extracellular portion of the chain corresponds to 448-450 (LGP). A helical membrane pass occupies residues 451–471 (SALTAIAVFLSLLPLNFFISK). Over 472–533 (KRNHHQEEQM…ALRTSGLLFS (62 aa)) the chain is Cytoplasmic. A helical transmembrane segment spans residues 534–554 (VSLVSFQVSTFLVALVVFAVH). At 555–575 (TLVAENAMNAEKAFVTLTVLN) the chain is on the extracellular side. Residues 576 to 596 (ILNKAQAFLPFSIHSLVQARV) form a helical membrane-spanning segment. Over 597–939 (SFDRLVTFLC…VKATVHLAYL (343 aa)) the chain is Cytoplasmic. The ABC transporter 1 domain maps to 629-853 (ITIHSATFAW…KGALMCLLDQ (225 aa)). 663–670 (GPVGAGKS) provides a ligand contact to ATP. Positions 854–919 (ARQPGDRGEG…LDDPDRAGWP (66 aa)) are disordered. A compositionally biased stretch (basic and acidic residues) spans 881 to 901 (RRPELRRERSIKSVPEKDRTT). The chain crosses the membrane as a helical span at residues 940–960 (RAVGTPLCLYALFLFLCQQVA). An ABC transmembrane type-1 2 domain is found at 947–1228 (CLYALFLFLC…VVRNWTDLEN (282 aa)). Over 961-997 (SFCRGYWLSLWADDPAVGGQQTQAALRGGIFGLLGCL) the chain is Extracellular. The helical transmembrane segment at 998-1018 (QAIGLFASMAAVLLGGARASR) threads the bilayer. At 1019-1061 (LLFQRLLWDVVRSPISFFERTPIGHLLNRFSKETDTVDVDIPD) the chain is on the cytoplasmic side. Residues 1062–1082 (KLRSLLMYAFGLLEVSLVVAV) form a helical membrane-spanning segment. Position 1083 (alanine 1083) is a topological domain, extracellular. The helical transmembrane segment at 1084 to 1104 (TPLATVAILPLFLLYAGFQSL) threads the bilayer. The Cytoplasmic portion of the chain corresponds to 1105 to 1175 (YVVSSCQLRR…VADRWLAANV (71 aa)). The helical transmembrane segment at 1176-1196 (ELLGNGLVFAAATCAVLSKAH) threads the bilayer. Residues 1197–1198 (LS) lie on the Extracellular side of the membrane. The helical transmembrane segment at 1199 to 1219 (AGLVGFSVSAALQVTQTLQWV) threads the bilayer. Over 1220 to 1503 (VRNWTDLENS…YRLAQESGLV (284 aa)) the chain is Cytoplasmic. One can recognise an ABC transporter 2 domain in the interval 1265–1499 (IEFRDFGLRY…KGLFYRLAQE (235 aa)). A Phosphoserine modification is found at serine 1286. Residue 1299–1306 (GRTGAGKS) coordinates ATP.

It belongs to the ABC transporter superfamily. ABCC family. Conjugate transporter (TC 3.A.1.208) subfamily. Mg(2+) serves as cofactor. In terms of processing, glycosylated. As to expression, expressed in kidney and liver. Very low expression in other tissues. In testis, localized to peritubular myoid cells, Leydig cells, along the basal membrane of Sertoli cells and moderately in the adluminal compartment of the seminiferous tubules.

It is found in the basal cell membrane. It localises to the basolateral cell membrane. The protein resides in the endoplasmic reticulum membrane. It catalyses the reaction an S-substituted glutathione(in) + ATP + H2O = an S-substituted glutathione(out) + ADP + phosphate + H(+). It carries out the reaction leukotriene C4(in) + ATP + H2O = leukotriene C4(out) + ADP + phosphate + H(+). Its activity is regulated as follows. LTC4 transport is completely inhibited by 1 mM orthovanadate. Its function is as follows. ATP-dependent transporter of the ATP-binding cassette (ABC) family that actively extrudes physiological compounds, and xenobiotics from cells. Mediates ATP-dependent transport of glutathione conjugates such as leukotriene-c4 (LTC4) and N-ethylmaleimide S-glutathione (NEM-GS) (in vitro), and an anionic cyclopentapeptide endothelin antagonist, BQ-123. May contribute to regulate the transport of organic compounds in testes across the blood-testis-barrier. Does not appear to actively transport drugs outside the cell. Confers low levels of cellular resistance to etoposide, teniposide, anthracyclines and cisplatin. Functionally, mediates the release of nucleoside triphosphates, predominantly ATP, into the circulation, where it is rapidly converted into AMP and the mineralization inhibitor inorganic pyrophosphate (PPi) by the ecto-enzyme ectonucleotide pyrophosphatase phosphodiesterase 1 (ENPP1), therefore playing a role in PPi homeostasis. Inhibits TNF-alpha-mediated apoptosis through blocking one or more caspases. The polypeptide is ATP-binding cassette sub-family C member 6 (ABCC6) (Homo sapiens (Human)).